The sequence spans 527 residues: Probable feruloyl esterase B-2 (527 aa).

The N-terminal stretch at 1–19 (MAPIHYLLPIITLGSAALA) is a signal peptide. 2 disulfide bridges follow: cysteine 28–cysteine 75 and cysteine 63–cysteine 114. Asparagine 53, asparagine 85, asparagine 98, asparagine 138, and asparagine 180 each carry an N-linked (GlcNAc...) asparagine glycan. Disulfide bonds link cysteine 187–cysteine 441, cysteine 256–cysteine 273, cysteine 282–cysteine 291, and cysteine 503–cysteine 525. Serine 188 functions as the Acyl-ester intermediate in the catalytic mechanism. Residues aspartate 257, aspartate 260, alanine 262, aspartate 264, and isoleucine 266 each coordinate Ca(2+). Asparagine 311 and asparagine 355 each carry an N-linked (GlcNAc...) asparagine glycan. Catalysis depends on charge relay system residues aspartate 400 and histidine 440. Asparagine 516 carries N-linked (GlcNAc...) asparagine glycosylation.

Belongs to the tannase family.

The protein localises to the secreted. It carries out the reaction feruloyl-polysaccharide + H2O = ferulate + polysaccharide.. In terms of biological role, involved in degradation of plant cell walls. Hydrolyzes the feruloyl-arabinose ester bond in arabinoxylans as well as the feruloyl-galactose and feruloyl-arabinose ester bonds in pectin. In Aspergillus terreus (strain NIH 2624 / FGSC A1156), this protein is Probable feruloyl esterase B-2 (faeB-2).